A 111-amino-acid chain; its full sequence is T cell receptor alpha variable 18 (111 aa).

Positions 1–20 are cleaved as a signal peptide; sequence MLSASCSGLVILLIFRRTSG. One can recognise an Ig-like domain in the interval 21–111; that stretch reads DSVTQTEGPV…DSAVYYCALR (91 aa). The N-linked (GlcNAc...) asparagine glycan is linked to asparagine 41. The cysteines at positions 42 and 108 are disulfide-linked.

Alpha-beta TR is a heterodimer composed of an alpha and beta chain; disulfide-linked. The alpha-beta TR is associated with the transmembrane signaling CD3 coreceptor proteins to form the TR-CD3 (TcR or TCR). The assembly of alpha-beta TR heterodimers with CD3 occurs in the endoplasmic reticulum where a single alpha-beta TR heterodimer associates with one CD3D-CD3E heterodimer, one CD3G-CD3E heterodimer and one CD247 homodimer forming a stable octameric structure. CD3D-CD3E and CD3G-CD3E heterodimers preferentially associate with TR alpha and TR beta chains, respectively. The association of the CD247 homodimer is the last step of TcR assembly in the endoplasmic reticulum and is required for transport to the cell surface.

The protein localises to the cell membrane. In terms of biological role, v region of the variable domain of T cell receptor (TR) alpha chain that participates in the antigen recognition. Alpha-beta T cell receptors are antigen specific receptors which are essential to the immune response and are present on the cell surface of T lymphocytes. Recognize peptide-major histocompatibility (MH) (pMH) complexes that are displayed by antigen presenting cells (APC), a prerequisite for efficient T cell adaptive immunity against pathogens. Binding of alpha-beta TR to pMH complex initiates TR-CD3 clustering on the cell surface and intracellular activation of LCK that phosphorylates the ITAM motifs of CD3G, CD3D, CD3E and CD247 enabling the recruitment of ZAP70. In turn ZAP70 phosphorylates LAT, which recruits numerous signaling molecules to form the LAT signalosome. The LAT signalosome propagates signal branching to three major signaling pathways, the calcium, the mitogen-activated protein kinase (MAPK) kinase and the nuclear factor NF-kappa-B (NF-kB) pathways, leading to the mobilization of transcription factors that are critical for gene expression and essential for T cell growth and differentiation. The T cell repertoire is generated in the thymus, by V-(D)-J rearrangement. This repertoire is then shaped by intrathymic selection events to generate a peripheral T cell pool of self-MH restricted, non-autoaggressive T cells. Post-thymic interaction of alpha-beta TR with the pMH complexes shapes TR structural and functional avidity. This is T cell receptor alpha variable 18 from Homo sapiens (Human).